Reading from the N-terminus, the 519-residue chain is Zinc finger and BTB domain-containing protein 18.3 (519 aa).

A BTB domain is found at 24–91 (CDCTVLVGDA…MYEGKLQFKD (68 aa)). The disordered stretch occupies residues 189-227 (ASIPQTGGEVDTHTTAAGKTADSPCSSTGSLSHRSATSM). A compositionally biased stretch (polar residues) spans 201-227 (HTTAAGKTADSPCSSTGSLSHRSATSM). 4 C2H2-type zinc fingers span residues 367 to 389 (FMCP…LSTH), 407 to 429 (PTCS…ERTH), 435 to 457 (FTCT…AVVH), and 463 to 486 (HACK…RKFH).

Belongs to the krueppel C2H2-type zinc-finger protein family. ZBTB18 subfamily.

The protein localises to the nucleus. Transcriptional repressor that plays a role in various developmental processes. Specifically binds the consensus DNA sequence 5'-[AC]ACATCTG[GT][AC]-3' which contains the E box core, and acts by recruiting chromatin remodeling multiprotein complexes. The polypeptide is Zinc finger and BTB domain-containing protein 18.3 (zbtb18.3) (Xenopus laevis (African clawed frog)).